The primary structure comprises 205 residues: Cytochrome c oxidase subunit 2 (205 aa).

Positions 115, 150, 152, 154, 158, and 161 each coordinate Cu cation. Position 152 (Glu152) interacts with Mg(2+).

Belongs to the cytochrome c oxidase subunit 2 family. Component of the cytochrome c oxidase (complex IV, CIV), a multisubunit enzyme composed of a catalytic core of 3 subunits and several supernumerary subunits. The complex exists as a monomer or a dimer and forms supercomplexes (SCs) in the inner mitochondrial membrane with ubiquinol-cytochrome c oxidoreductase (cytochrome b-c1 complex, complex III, CIII). Requires Cu cation as cofactor.

It is found in the mitochondrion inner membrane. The catalysed reaction is 4 Fe(II)-[cytochrome c] + O2 + 8 H(+)(in) = 4 Fe(III)-[cytochrome c] + 2 H2O + 4 H(+)(out). Component of the cytochrome c oxidase, the last enzyme in the mitochondrial electron transport chain which drives oxidative phosphorylation. The respiratory chain contains 3 multisubunit complexes succinate dehydrogenase (complex II, CII), ubiquinol-cytochrome c oxidoreductase (cytochrome b-c1 complex, complex III, CIII) and cytochrome c oxidase (complex IV, CIV), that cooperate to transfer electrons derived from NADH and succinate to molecular oxygen, creating an electrochemical gradient over the inner membrane that drives transmembrane transport and the ATP synthase. Cytochrome c oxidase is the component of the respiratory chain that catalyzes the reduction of oxygen to water. Electrons originating from reduced cytochrome c in the intermembrane space (IMS) are transferred via the dinuclear copper A center (CU(A)) of subunit 2 and heme A of subunit 1 to the active site in subunit 1, a binuclear center (BNC) formed by heme A3 and copper B (CU(B)). The BNC reduces molecular oxygen to 2 water molecules using 4 electrons from cytochrome c in the IMS and 4 protons from the mitochondrial matrix. This is Cytochrome c oxidase subunit 2 (COII) from Paramecium tetraurelia.